Reading from the N-terminus, the 210-residue chain is MAKNKFSKDWIHQHINDPYVKLAQQKGYRARAAFKLLEILDAEKLMRRGDVVVDLGSAPGSWSQVARERLAGPGGVVDGRIIALDLLPMEPVAGVEFIQGDFREEEVLEQLARMVDGQPVDLVISDMAPNLSGVGVADSARIQHVCELALEFACAHLKPNGALIVKAFHGSGFSQIVQSYKQRFKRVVERKPKASRDKSSETFLVARDLK.

S-adenosyl-L-methionine is bound by residues Gly60, Trp62, Asp85, Asp101, and Asp126. Lys166 (proton acceptor) is an active-site residue.

It belongs to the class I-like SAM-binding methyltransferase superfamily. RNA methyltransferase RlmE family.

The protein localises to the cytoplasm. The enzyme catalyses uridine(2552) in 23S rRNA + S-adenosyl-L-methionine = 2'-O-methyluridine(2552) in 23S rRNA + S-adenosyl-L-homocysteine + H(+). In terms of biological role, specifically methylates the uridine in position 2552 of 23S rRNA at the 2'-O position of the ribose in the fully assembled 50S ribosomal subunit. The chain is Ribosomal RNA large subunit methyltransferase E from Bordetella pertussis (strain Tohama I / ATCC BAA-589 / NCTC 13251).